We begin with the raw amino-acid sequence, 226 residues long: UPF0758 protein PputW619_0186 (226 aa).

An MPN domain is found at 102–224 (ALESPSAVRR…PLSMVEQGWI (123 aa)). Zn(2+)-binding residues include histidine 173, histidine 175, and aspartate 186. The JAMM motif signature appears at 173-186 (HNHPSGNSEPSQDD).

Belongs to the UPF0758 family.

The polypeptide is UPF0758 protein PputW619_0186 (Pseudomonas putida (strain W619)).